The chain runs to 217 residues: Small ribosomal subunit protein uS3 (217 aa).

The KH type-2 domain maps to 38 to 106 (IRKFIDNELK…KVHINVIEIK (69 aa)).

Belongs to the universal ribosomal protein uS3 family. In terms of assembly, part of the 30S ribosomal subunit. Forms a tight complex with proteins S10 and S14.

Its function is as follows. Binds the lower part of the 30S subunit head. Binds mRNA in the 70S ribosome, positioning it for translation. The sequence is that of Small ribosomal subunit protein uS3 from Staphylococcus epidermidis (strain ATCC 35984 / DSM 28319 / BCRC 17069 / CCUG 31568 / BM 3577 / RP62A).